Reading from the N-terminus, the 319-residue chain is Coiled-coil domain-containing protein PF3D7_1144200 (319 aa).

Over residues 1-12 the composition is skewed to basic and acidic residues; that stretch reads MSEEHSNDHIED. Disordered regions lie at residues 1–43 and 112–158; these read MSEE…SESS and KLEK…NQHN. Polar residues predominate over residues 16-26; the sequence is CSQNCDETNSP. Composition is skewed to basic and acidic residues over residues 27 to 36 and 112 to 131; these read KNEKDEKDFK and KLEK…KKVT. 3 coiled-coil regions span residues 100–134, 166–242, and 281–310; these read DLAN…TNDS, ELNE…IKKN, and NSNC…LINI. Low complexity predominate over residues 132-150; sequence NDSTNNKNKNNSVPFLNEN.

This is Coiled-coil domain-containing protein PF3D7_1144200 from Plasmodium falciparum (isolate 3D7).